We begin with the raw amino-acid sequence, 215 residues long: 25 kDa ookinete surface antigen (215 aa).

Residues 1-16 (MNMSYLFFFFFIQLVL) form the signal peptide. In terms of domain architecture, EGF-like 1; truncated spans 29-58 (CKDGFLIQMSNHFECNCNPGFVLTSESTCE). 3 EGF-like domains span residues 59-104 (NKVE…SICV), 104-148 (VPNE…NTCT), and 151-191 (GQTE…NACI). 9 disulfides stabilise this stretch: C63-C78, C72-C90, C92-C103, C108-C118, C113-C131, C133-C147, C155-C166, C159-C175, and C177-C190. N144 and N163 each carry an N-linked (GlcNAc...) asparagine glycan. A lipid anchor (GPI-anchor amidated serine) is attached at S192. Residues 193–215 (FSLFNILNLSIIFIISLIYFYII) constitute a propeptide, removed in mature form. A glycan (N-linked (GlcNAc...) asparagine) is linked at N200.

It localises to the cell membrane. This Plasmodium gallinaceum protein is 25 kDa ookinete surface antigen.